The primary structure comprises 282 residues: Sulfur carrier protein FdhD (282 aa).

Cysteine 115 (cysteine persulfide intermediate) is an active-site residue.

Belongs to the FdhD family.

The protein resides in the cytoplasm. Functionally, required for formate dehydrogenase (FDH) activity. Acts as a sulfur carrier protein that transfers sulfur from IscS to the molybdenum cofactor prior to its insertion into FDH. This chain is Sulfur carrier protein FdhD, found in Streptomyces avermitilis (strain ATCC 31267 / DSM 46492 / JCM 5070 / NBRC 14893 / NCIMB 12804 / NRRL 8165 / MA-4680).